A 179-amino-acid polypeptide reads, in one-letter code: Peptide deformylase (179 aa).

Positions 102 and 144 each coordinate Fe cation. Glu145 is a catalytic residue. His148 provides a ligand contact to Fe cation.

This sequence belongs to the polypeptide deformylase family. Requires Fe(2+) as cofactor.

The enzyme catalyses N-terminal N-formyl-L-methionyl-[peptide] + H2O = N-terminal L-methionyl-[peptide] + formate. Its function is as follows. Removes the formyl group from the N-terminal Met of newly synthesized proteins. Requires at least a dipeptide for an efficient rate of reaction. N-terminal L-methionine is a prerequisite for activity but the enzyme has broad specificity at other positions. This Wolbachia sp. subsp. Brugia malayi (strain TRS) protein is Peptide deformylase.